The chain runs to 348 residues: Sorbitol dehydrogenase (348 aa).

Cysteine 40, histidine 65, and glutamate 66 together coordinate Zn(2+). NAD(+) contacts are provided by residues isoleucine 179, aspartate 199, arginine 204, 269 to 271 (VGI), and 293 to 295 (SFR). Arginine 295 serves as a coordination point for substrate.

The protein belongs to the zinc-containing alcohol dehydrogenase family. As to quaternary structure, homotetramer. Requires Zn(2+) as cofactor.

It catalyses the reaction xylitol + NAD(+) = D-xylulose + NADH + H(+). It carries out the reaction L-iditol + NAD(+) = keto-L-sorbose + NADH + H(+). The catalysed reaction is keto-D-fructose + NADH + H(+) = D-sorbitol + NAD(+). Functionally, polyol dehydrogenase that catalyzes the reversible NAD(+)-dependent oxidation of various sugar alcohols. Is active with xylitol, L-iditol and D-sorbitol (D-glucitol) as substrates, leading to the C2-oxidized products D-xylulose, L-sorbose and D-fructose, respectively. Is a key enzyme in the polyol pathway that interconverts glucose and fructose via sorbitol, which constitutes an important alternate route for glucose metabolism. The polypeptide is Sorbitol dehydrogenase (SDH) (Bombyx mori (Silk moth)).